We begin with the raw amino-acid sequence, 668 residues long: Exoribonuclease 2 (668 aa).

Residues 193 to 521 (RIEMTHVPFV…INHRMLKAVI (329 aa)) enclose the RNB domain. Residues 568–650 (QTCFTGEIFD…ENRSLVAKPT (83 aa)) form the S1 motif domain.

Belongs to the RNR ribonuclease family. RNase II subfamily.

It localises to the cytoplasm. The enzyme catalyses Exonucleolytic cleavage in the 3'- to 5'-direction to yield nucleoside 5'-phosphates.. Its function is as follows. Involved in mRNA degradation. Hydrolyzes single-stranded polyribonucleotides processively in the 3' to 5' direction. This Vibrio parahaemolyticus serotype O3:K6 (strain RIMD 2210633) protein is Exoribonuclease 2.